The following is a 342-amino-acid chain: Trans-enoyl reductase himH (342 aa).

Residue 46-49 (TDWK) participates in NADP(+) binding. Residue 133 to 140 (LSVSTAAS) coordinates substrate. Residues 168–171 (SSSV), 191–194 (SQAN), 255–256 (VM), and 329–330 (VS) contribute to the NADP(+) site.

This sequence belongs to the zinc-containing alcohol dehydrogenase family. Monomer.

The protein operates within secondary metabolite biosynthesis. Functionally, trans-enoyl reductase; part of the him gene cluster that mediates the biosynthesis of himeic acid A, a ubiquitin-activating enzyme (E1) inhibitor. First, himA, together with the trans-enoyl reductase himH, catalyzes the formation of apolyketide chain, which is then condensed with leucine by the NRPS activity of himA. Dieckmann cyclization and release from himA gives a tetramic acid intermediate as the product of himA PKS-NRPS. HimG then catalyzes alpha-oxidation of the tetramic acid ring, with a subsequent rearrangement to yield apyrone intermediate. Two terminal methyl groups of polyketide and amide side chains are oxidized to carboxylic acids by himC cytochrome P450 monooxygenase to form himeic acid A. Himeic acid A is further converted to himeic acid B and C during culture growth. No gene responsible for pyrone to pyridone conversion was found in the him gene cluster and himeic acid A is non-enzymatically converted to himeic acid C by the incorporation of an ammonium nitrogen atom in a pH5 buffer, and to himeic acid B at a conversion ratio of 50% during incubation in MeOH for 5 days. In Aspergillus japonicus, this protein is Trans-enoyl reductase himH.